Reading from the N-terminus, the 145-residue chain is CASP-like protein SELMODRAFT_406854 (145 aa).

The Cytoplasmic segment spans residues Met-1–Pro-31. A helical transmembrane segment spans residues Thr-32–Val-52. Residues Thr-53 to Leu-75 are Extracellular-facing. A helical membrane pass occupies residues Ile-76 to Phe-96. The Cytoplasmic segment spans residues Leu-97–Ala-112. The helical transmembrane segment at Leu-113–Ile-133 threads the bilayer. The Extracellular segment spans residues Arg-134–Val-145.

It belongs to the Casparian strip membrane proteins (CASP) family. As to quaternary structure, homodimer and heterodimers.

It localises to the cell membrane. In Selaginella moellendorffii (Spikemoss), this protein is CASP-like protein SELMODRAFT_406854.